The sequence spans 880 residues: Translation initiation factor IF-2 (880 aa).

Disordered stretches follow at residues 51-78, 93-116, and 142-293; these read KQHGGESKTKMTLQRKTKSTLNVKGSTG, YVKRSDSETQETQAAELADQQAAN, and KEAD…FEKP. The span at 69-78 shows a compositional bias: polar residues; the sequence is STLNVKGSTG. Over residues 142 to 229 the composition is skewed to basic and acidic residues; that stretch reads KEADEKAKKA…ARKKAAEGGD (88 aa). Basic residues predominate over residues 269-279; the sequence is GRRTRRGKKQR. The 170-residue stretch at 380–549 folds into the tr-type G domain; it reads SRAPVVTIMG…LLQAEMLDLS (170 aa). The interval 389–396 is G1; it reads GHVDHGKT. Residue 389 to 396 coordinates GTP; the sequence is GHVDHGKT. The segment at 414–418 is G2; sequence GITQH. Positions 435 to 438 are G3; the sequence is DTPG. GTP-binding positions include 435 to 439 and 489 to 492; these read DTPGH and NKID. The G4 stretch occupies residues 489–492; it reads NKID. The interval 525–527 is G5; the sequence is SAK.

This sequence belongs to the TRAFAC class translation factor GTPase superfamily. Classic translation factor GTPase family. IF-2 subfamily.

The protein localises to the cytoplasm. Its function is as follows. One of the essential components for the initiation of protein synthesis. Protects formylmethionyl-tRNA from spontaneous hydrolysis and promotes its binding to the 30S ribosomal subunits. Also involved in the hydrolysis of GTP during the formation of the 70S ribosomal complex. This chain is Translation initiation factor IF-2, found in Psychromonas ingrahamii (strain DSM 17664 / CCUG 51855 / 37).